We begin with the raw amino-acid sequence, 646 residues long: uncharacterized protein (646 aa).

8 helical membrane-spanning segments follow: residues 20 to 42 (ILSR…LYLL), 55 to 77 (FLAG…IHQV), 97 to 115 (LLHF…HYML), 127 to 149 (YTFD…FSYW), 159 to 181 (IAFV…FFKL), 188 to 206 (ILLG…LLLA), 216 to 238 (YGAV…YHLF), and 251 to 273 (WVTM…IGTA).

It localises to the cell membrane. This is an uncharacterized protein from Bacillus subtilis (strain 168).